The primary structure comprises 394 residues: F-box protein At2g17830 (394 aa).

One can recognise an F-box domain in the interval 1–47; that stretch reads MAIMSDLPRDLLAEILSRVPLASLRSVRFTCKKWNDLSKDRSFLKKQ.

This chain is F-box protein At2g17830, found in Arabidopsis thaliana (Mouse-ear cress).